The sequence spans 347 residues: Transcription factor JunB (347 aa).

Glycyl lysine isopeptide (Lys-Gly) (interchain with G-Cter in SUMO2) cross-links involve residues lysine 4, lysine 33, and lysine 36. The interval 50 to 77 (LKAPGARGPGPEGNGGGSYFSSQGSDTG) is disordered. Gly residues predominate over residues 56-67 (RGPGPEGNGGGS). Over residues 68–77 (YFSSQGSDTG) the composition is skewed to polar residues. A Glycyl lysine isopeptide (Lys-Gly) (interchain with G-Cter in SUMO2) cross-link involves residue lysine 81. Phosphothreonine is present on residues threonine 102 and threonine 104. Residue serine 117 is modified to Phosphoserine. A Glycyl lysine isopeptide (Lys-Gly) (interchain with G-Cter in SUMO2) cross-link involves residue lysine 141. Lysine 240 carries the post-translational modification N6-acetyllysine; alternate. Lysine 240 is covalently cross-linked (Glycyl lysine isopeptide (Lys-Gly) (interchain with G-Cter in SUMO1); alternate). Residue lysine 240 forms a Glycyl lysine isopeptide (Lys-Gly) (interchain with G-Cter in SUMO2); alternate linkage. A compositionally biased stretch (basic and acidic residues) spans 241-253 (EEPQTVPEARSRD). The tract at residues 241 to 260 (EEPQTVPEARSRDATPPVSP) is disordered. Position 251 is a phosphoserine (serine 251). Threonine 255 carries the phosphothreonine modification. Serine 259 carries the post-translational modification Phosphoserine. The interval 268–295 (RIKVERKRLRNRLAATKCRKRKLERIAR) is basic motif. Residues 268–331 (RIKVERKRLR…AQLKQKVMTH (64 aa)) enclose the bZIP domain. The segment at 296-324 (LEDKVKTLKAENAGLSSTAGLLREQVAQL) is leucine-zipper. Lysine 343 participates in a covalent cross-link: Glycyl lysine isopeptide (Lys-Gly) (interchain with G-Cter in SUMO2).

The protein belongs to the bZIP family. Jun subfamily. As to quaternary structure, binds DNA as a homodimer or as a heterodimer with another member of the Jun/Fos family. Component of an AP-1 transcription factor complex composed of JUN-FOS heterodimers. As part of the AP-1 transcription factor complex, forms heterodimers with FOSB, thereby binding to the AP-1 consensus sequence and stimulating transcription. Interacts with ITCH (via its WW domains). In terms of processing, ubiquitinated by ITCH, leading to its degradation.

Its subcellular location is the nucleus. Its function is as follows. Transcription factor involved in regulating gene activity following the primary growth factor response. Binds to the DNA sequence 5'-TGA[GC]TCA-3'. Heterodimerizes with proteins of the FOS family to form an AP-1 transcription complex, thereby enhancing its DNA binding activity to an AP-1 consensus sequence and its transcriptional activity. This Bos taurus (Bovine) protein is Transcription factor JunB (JUNB).